A 404-amino-acid chain; its full sequence is Subtilisin-like proteinase Mp1 (404 aa).

Residues 1–19 form the signal peptide; the sequence is MVGFKTLALHLAAVLPALA. Positions 20-112 are excised as a propeptide; it reads APVDKQATQV…VEPDQVWDLY (93 aa). Positions 33-111 constitute an Inhibitor I9 domain; sequence SYIITLKQGA…FVEPDQVWDL (79 aa). The Peptidase S8 domain occupies 121-404; sequence PWGLGSISHR…NLIAFNGVTA (284 aa). Residue asparagine 133 is glycosylated (N-linked (GlcNAc...) asparagine). Active-site charge relay system residues include aspartate 154, histidine 186, and serine 347.

The protein belongs to the peptidase S8 family.

The protein resides in the secreted. The polypeptide is Subtilisin-like proteinase Mp1 (Magnaporthiopsis poae (Kentucky bluegrass fungus)).